Consider the following 211-residue polypeptide: Protein-L-isoaspartate O-methyltransferase 1 (211 aa).

Ser62 is a catalytic residue.

The protein belongs to the methyltransferase superfamily. L-isoaspartyl/D-aspartyl protein methyltransferase family.

The protein localises to the cytoplasm. The enzyme catalyses [protein]-L-isoaspartate + S-adenosyl-L-methionine = [protein]-L-isoaspartate alpha-methyl ester + S-adenosyl-L-homocysteine. In terms of biological role, catalyzes the methyl esterification of L-isoaspartyl residues in peptides and proteins that result from spontaneous decomposition of normal L-aspartyl and L-asparaginyl residues. It plays a role in the repair and/or degradation of damaged proteins. The protein is Protein-L-isoaspartate O-methyltransferase 1 of Shewanella sediminis (strain HAW-EB3).